A 330-amino-acid chain; its full sequence is Carbonic anhydrase 1 (330 aa).

Residues 1-109 form a chloroplast transit peptide-like region; the sequence is MSTASAFAIN…AAARIDQITA (109 aa).

This sequence belongs to the beta-class carbonic anhydrase family. In terms of assembly, homohexamer.

Its subcellular location is the cytoplasm. The catalysed reaction is hydrogencarbonate + H(+) = CO2 + H2O. Functionally, reversible hydration of carbon dioxide. This is Carbonic anhydrase 1 from Flaveria linearis (Narrowleaf yellowtops).